A 331-amino-acid polypeptide reads, in one-letter code: MSFFGFGQTAEIDIVLNDAETRKKVEHKTEDGKKDKYFLFYDGETVSGKVNVTLKTPGKRLEHYGIKIEFVGQIELYYDRGNHHEFVSLVKDLARPGELSQSQTFDFEFTHVEKPYESYTGQNVKLRYFLRATISRRLNDISKEMDIVVQTLCTYPEINSSIKMEVGIEDCLHIEFEYNKSKYHLRDVIVGKIYFLLVRIKIKHMEIDIIKRETTGTGPSVYHENDTIAKYEIMDGAPVRGESIPIRLFLAGYEMTPTMRDINKKFSVRYYLNLVLIDEEERRYFKQQEITLWRKGDIVRRSMSQQATIAAQRYEGSNPEPTSAQAKEETD.

The interval 310 to 331 (AAQRYEGSNPEPTSAQAKEETD) is disordered.

This sequence belongs to the VPS26 family. In terms of assembly, component of the heterotrimeric retromer cargo-selective complex (CSC) which is believed to associate with variable sorting nexins to form functionally distinct retromer complex variants.

It is found in the cytoplasm. Its subcellular location is the membrane. The protein resides in the endosome. Its function is as follows. Acts as a component of the retromer cargo-selective complex (CSC). The CSC is believed to be the core functional component of retromer or respective retromer complex variants acting to prevent missorting of selected transmembrane cargo proteins into the lysosomal degradation pathway. Retromer mediates retrograde transport of cargo proteins from endosomes to the trans-Golgi network (TGN). This chain is Vacuolar protein sorting-associated protein 26B (vps26b), found in Danio rerio (Zebrafish).